The primary structure comprises 445 residues: Histone acetyltransferase of the MYST family 2 (445 aa).

Over residues 1–23 the composition is skewed to polar residues; it reads MGSSANTETNGNAPPPSSNQKPP. The tract at residues 1 to 58 is disordered; that stretch reads MGSSANTETNGNAPPPSSNQKPPATNGVDGSHPPPPPLTPDQAIIESDPSKKRKMGML. Residues 60–118 enclose the Tudor-knot domain; the sequence is LEVGTRVMCRWRDGKHHPVKVIERRRIHNGGQNDYEYYVHYTEFNRRLDEWTQLDQLDL. An MYST-type HAT domain is found at 169-440; the sequence is TKVKNISTIE…VDASKLIWTP (272 aa). The segment at 202–227 adopts a C2HC MYST-type zinc-finger fold; the sequence is LFFCEFCLNFMKRKEQLQRHMRKCDL. At lysine 269 the chain carries N6-acetyllysine; by autocatalysis. Acetyl-CoA-binding positions include 312–314 and 319–325; these read ILT and QRKGYGK. Glutamate 345 acts as the Proton donor/acceptor in catalysis. Serine 349 is a binding site for acetyl-CoA.

The protein belongs to the MYST (SAS/MOZ) family. In terms of assembly, interacts with MRG1 and MRG2. Autoacetylation at Lys-269 is required for proper function. As to expression, expressed in cotyledons, leaves, stems, roots and, at higher levels in developing flowers, particularly in the anthers and gynoecia. Constitutively expressed in all tissues, predominantly in shoot apical meristem.

Its subcellular location is the nucleus. It catalyses the reaction L-lysyl-[protein] + acetyl-CoA = N(6)-acetyl-L-lysyl-[protein] + CoA + H(+). Functionally, histone acetyltransferase which may be involved in transcriptional activation. Acetylates 'Lys-5' of histone H4 (H4K5ac). Essential for gametophyte development. Negative regulator of flowering controlling the H4K5ac levels in the FLC chromatin. This is Histone acetyltransferase of the MYST family 2 from Arabidopsis thaliana (Mouse-ear cress).